Consider the following 404-residue polypeptide: Cysteine desulfurase IscS (404 aa).

Pyridoxal 5'-phosphate is bound by residues 75–76, Asn-155, Gln-183, and 203–205; these read AT and SAH. Residue Lys-206 is modified to N6-(pyridoxal phosphate)lysine. A pyridoxal 5'-phosphate-binding site is contributed by Thr-243. Cys-328 (cysteine persulfide intermediate) is an active-site residue. Cys-328 lines the [2Fe-2S] cluster pocket.

It belongs to the class-V pyridoxal-phosphate-dependent aminotransferase family. NifS/IscS subfamily. As to quaternary structure, homodimer. Forms a heterotetramer with IscU, interacts with other sulfur acceptors. Requires pyridoxal 5'-phosphate as cofactor.

It is found in the cytoplasm. The enzyme catalyses (sulfur carrier)-H + L-cysteine = (sulfur carrier)-SH + L-alanine. The protein operates within cofactor biosynthesis; iron-sulfur cluster biosynthesis. Its function is as follows. Master enzyme that delivers sulfur to a number of partners involved in Fe-S cluster assembly, tRNA modification or cofactor biosynthesis. Catalyzes the removal of elemental sulfur atoms from cysteine to produce alanine. Functions as a sulfur delivery protein for Fe-S cluster synthesis onto IscU, an Fe-S scaffold assembly protein, as well as other S acceptor proteins. This Ruthia magnifica subsp. Calyptogena magnifica protein is Cysteine desulfurase IscS.